Here is a 291-residue protein sequence, read N- to C-terminus: Acetyl-coenzyme A carboxylase carboxyl transferase subunit beta (291 aa).

Residues 1–23 (MSWLSKLMPSGIRTDNTPSKKRS) form a disordered region. The CoA carboxyltransferase N-terminal domain maps to 28–291 (LWEKCSNCGS…LGRQPAPEVA (264 aa)). The Zn(2+) site is built by C32, C35, C51, and C54. The C4-type zinc finger occupies 32 to 54 (CSNCGSALYRPELEENLEVCPKC).

This sequence belongs to the AccD/PCCB family. As to quaternary structure, acetyl-CoA carboxylase is a heterohexamer composed of biotin carboxyl carrier protein (AccB), biotin carboxylase (AccC) and two subunits each of ACCase subunit alpha (AccA) and ACCase subunit beta (AccD). Zn(2+) serves as cofactor.

The protein resides in the cytoplasm. The enzyme catalyses N(6)-carboxybiotinyl-L-lysyl-[protein] + acetyl-CoA = N(6)-biotinyl-L-lysyl-[protein] + malonyl-CoA. The protein operates within lipid metabolism; malonyl-CoA biosynthesis; malonyl-CoA from acetyl-CoA: step 1/1. Functionally, component of the acetyl coenzyme A carboxylase (ACC) complex. Biotin carboxylase (BC) catalyzes the carboxylation of biotin on its carrier protein (BCCP) and then the CO(2) group is transferred by the transcarboxylase to acetyl-CoA to form malonyl-CoA. The protein is Acetyl-coenzyme A carboxylase carboxyl transferase subunit beta of Stenotrophomonas maltophilia (strain R551-3).